A 596-amino-acid polypeptide reads, in one-letter code: Transketolase-like protein 1 (596 aa).

H46 serves as a coordination point for substrate. Thiamine diphosphate-binding positions include S49 and 94-96 (GWL). A Mg(2+)-binding site is contributed by D126. Residues G127 and N156 each coordinate thiamine diphosphate. Positions 156 and 158 each coordinate Mg(2+). Positions 218 and 232 each coordinate thiamine diphosphate. 3 residues coordinate substrate: H232, R292, and S319. E340 and F366 together coordinate thiamine diphosphate. E340 serves as the catalytic Proton donor. 2 residues coordinate substrate: H390 and D398. Q402 serves as a coordination point for thiamine diphosphate. Position 448 (R448) interacts with substrate.

It belongs to the transketolase family. As to quaternary structure, homodimer. Mg(2+) is required as a cofactor. The cofactor is Ca(2+). Requires Mn(2+) as cofactor. It depends on Co(2+) as a cofactor. Thiamine diphosphate serves as cofactor.

It is found in the cytoplasm. The enzyme catalyses D-sedoheptulose 7-phosphate + D-glyceraldehyde 3-phosphate = aldehydo-D-ribose 5-phosphate + D-xylulose 5-phosphate. Its function is as follows. Catalyzes the transfer of a two-carbon ketol group from a ketose donor to an aldose acceptor, via a covalent intermediate with the cofactor thiamine pyrophosphate. The protein is Transketolase-like protein 1 (TKTL1) of Macaca fascicularis (Crab-eating macaque).